A 90-amino-acid chain; its full sequence is Guanine nucleotide-binding protein subunit gamma (90 aa).

A lipid anchor (S-palmitoyl cysteine) is attached at cysteine 86. Cysteine 87 is subject to Cysteine methyl ester. Cysteine 87 is lipidated: S-farnesyl cysteine. The propeptide at 88 to 90 (CIM) is removed in mature form.

This sequence belongs to the G protein gamma family. G proteins are composed of 3 units, alpha, beta and gamma.

It localises to the membrane. The protein is Guanine nucleotide-binding protein subunit gamma of Eremothecium gossypii (strain ATCC 10895 / CBS 109.51 / FGSC 9923 / NRRL Y-1056) (Yeast).